The following is a 66-amino-acid chain: EEVRDAYIAQPHNCVYHCFRDSYCNDLCIKHGAESGECKWFTSSGNACWCVKLPKSEPIKVPGKCH.

The LCN-type CS-alpha/beta domain maps to 4–66; that stretch reads RDAYIAQPHN…EPIKVPGKCH (63 aa). Disulfide bonds link cysteine 14-cysteine 65, cysteine 18-cysteine 38, cysteine 24-cysteine 48, and cysteine 28-cysteine 50.

Belongs to the long (4 C-C) scorpion toxin superfamily. Sodium channel inhibitor family. Alpha subfamily. In terms of tissue distribution, expressed by the venom gland.

It is found in the secreted. In terms of biological role, this recombinant toxin slows fast inactivation on Nav1.1/SCN1A (EC(50)=17 nM), Nav1.4/SN4A (EC(50)=7.5 nM), Nav1.5/SCN5A (EC(50)=9.2 nM) and Nav1.6/SCN8A (EC(50)=37.3 nM) voltage-gated sodium channels. On Nav1.1/SCN1A channel, it acts as an agonist by inducing a shift in both the voltage dependence of channel inactivation (alpha-toxin activity) and activation (beta-toxin activity). In vivo, shows moderate insecticidal activities. It induces irreversible paralysis in blowflies and lethal effects in D.melanogaster. The protein is Delta-buthitoxin-Hj1a of Hottentotta judaicus (Black scorpion).